The sequence spans 89 residues: Small ribosomal subunit protein uS14A (89 aa).

It belongs to the universal ribosomal protein uS14 family. Part of the 30S ribosomal subunit. Contacts proteins S3 and S10.

Binds 16S rRNA, required for the assembly of 30S particles and may also be responsible for determining the conformation of the 16S rRNA at the A site. The sequence is that of Small ribosomal subunit protein uS14A from Bacillus velezensis (strain DSM 23117 / BGSC 10A6 / LMG 26770 / FZB42) (Bacillus amyloliquefaciens subsp. plantarum).